Here is a 1241-residue protein sequence, read N- to C-terminus: uncharacterized protein (1241 aa).

Positions 21 to 49 (ILNDNVREINIAKKEIKQLREYVGILQQN) form a coiled coil. The next 3 membrane-spanning stretches (helical) occupy residues 261–281 (VNAI…FVLG), 918–938 (AVVG…GLVA), and 947–967 (GHIV…VIGG). The tract at residues 1005 to 1028 (THIGKEDSNNGVSTSTNKRSIGKA) is disordered. The span at 1013–1028 (NNGVSTSTNKRSIGKA) shows a compositional bias: polar residues.

Its subcellular location is the host membrane. This is an uncharacterized protein from Diadromus pulchellus (Parasitic wasp).